The following is a 454-amino-acid chain: UDP-N-acetylmuramoylalanine--D-glutamate ligase (454 aa).

Residue 116 to 122 coordinates ATP; it reads GTNGKTS.

Belongs to the MurCDEF family.

The protein resides in the cytoplasm. It carries out the reaction UDP-N-acetyl-alpha-D-muramoyl-L-alanine + D-glutamate + ATP = UDP-N-acetyl-alpha-D-muramoyl-L-alanyl-D-glutamate + ADP + phosphate + H(+). Its pathway is cell wall biogenesis; peptidoglycan biosynthesis. Its function is as follows. Cell wall formation. Catalyzes the addition of glutamate to the nucleotide precursor UDP-N-acetylmuramoyl-L-alanine (UMA). The protein is UDP-N-acetylmuramoylalanine--D-glutamate ligase of Lachnoclostridium phytofermentans (strain ATCC 700394 / DSM 18823 / ISDg) (Clostridium phytofermentans).